The chain runs to 357 residues: 4-hydroxyphenylpyruvate dioxygenase (357 aa).

VOC domains lie at 12 to 129 and 158 to 313; these read GFEF…LIDR and IIDH…IFSE. His161, His240, and Glu322 together coordinate Fe cation.

Belongs to the 4HPPD family. As to quaternary structure, homotetramer. Requires Fe cation as cofactor.

The catalysed reaction is 3-(4-hydroxyphenyl)pyruvate + O2 = homogentisate + CO2. The protein operates within amino-acid degradation; L-phenylalanine degradation; acetoacetate and fumarate from L-phenylalanine: step 3/6. The polypeptide is 4-hydroxyphenylpyruvate dioxygenase (hpd) (Pseudomonas sp. (strain P.J. 874)).